The following is a 251-amino-acid chain: Auxin-responsive protein IAA29 (251 aa).

The short motif at 3–7 is the EAR-like (transcriptional repression) element; that stretch reads LDLGL. A PB1 domain is found at 159 to 246; that stretch reads SMYVKVKMDG…SIIRDRPCAY (88 aa).

Belongs to the Aux/IAA family. Homodimers and heterodimers.

It is found in the nucleus. Its function is as follows. Aux/IAA proteins are short-lived transcriptional factors that function as repressors of early auxin response genes at low auxin concentrations. Repression is thought to result from the interaction with auxin response factors (ARFs), proteins that bind to the auxin-responsive promoter element (AuxRE). Formation of heterodimers with ARF proteins may alter their ability to modulate early auxin response genes expression. The polypeptide is Auxin-responsive protein IAA29 (IAA29) (Arabidopsis thaliana (Mouse-ear cress)).